A 71-amino-acid chain; its full sequence is Small ribosomal subunit protein eS17 (71 aa).

Belongs to the eukaryotic ribosomal protein eS17 family.

This Pyrobaculum arsenaticum (strain DSM 13514 / JCM 11321 / PZ6) protein is Small ribosomal subunit protein eS17.